We begin with the raw amino-acid sequence, 870 residues long: DNA mismatch repair protein MutS (870 aa).

622 to 629 contacts ATP; sequence GPNMGGKS.

This sequence belongs to the DNA mismatch repair MutS family.

Its function is as follows. This protein is involved in the repair of mismatches in DNA. It is possible that it carries out the mismatch recognition step. This protein has a weak ATPase activity. This chain is DNA mismatch repair protein MutS, found in Methylibium petroleiphilum (strain ATCC BAA-1232 / LMG 22953 / PM1).